The following is a 539-amino-acid chain: GMP synthase [glutamine-hydrolyzing] (539 aa).

A Glutamine amidotransferase type-1 domain is found at 4-202 (KILILDFGSQ…VLQIAGAKPD (199 aa)). Cys-81 acts as the Nucleophile in catalysis. Active-site residues include His-176 and Glu-178. The region spanning 203–395 (WIMKNHIEEA…LGLPPEMVYR (193 aa)) is the GMPS ATP-PPase domain. Position 230-236 (230-236 (SGGVDSS)) interacts with ATP.

Homodimer.

The enzyme catalyses XMP + L-glutamine + ATP + H2O = GMP + L-glutamate + AMP + diphosphate + 2 H(+). Its pathway is purine metabolism; GMP biosynthesis; GMP from XMP (L-Gln route): step 1/1. Functionally, catalyzes the synthesis of GMP from XMP. The protein is GMP synthase [glutamine-hydrolyzing] of Burkholderia vietnamiensis (strain G4 / LMG 22486) (Burkholderia cepacia (strain R1808)).